A 270-amino-acid chain; its full sequence is Sulfur carrier protein FdhD (270 aa).

The active-site Cysteine persulfide intermediate is cysteine 116. Mo-bis(molybdopterin guanine dinucleotide) is bound at residue 253-258 (FAREGK).

The protein belongs to the FdhD family.

The protein localises to the cytoplasm. Its function is as follows. Required for formate dehydrogenase (FDH) activity. Acts as a sulfur carrier protein that transfers sulfur from IscS to the molybdenum cofactor prior to its insertion into FDH. The protein is Sulfur carrier protein FdhD of Haemophilus influenzae (strain ATCC 51907 / DSM 11121 / KW20 / Rd).